The sequence spans 192 residues: Ion-translocating oxidoreductase complex subunit B (192 aa).

Positions 1–26 are hydrophobic; that stretch reads MNAIWIAVAAVSLLGLAFGAILGYAS. The 4Fe-4S domain maps to 32–91; sequence EDDPVVEKIDEILPQSQCGQCGYPGCRPYAEAISCNGEKINRCAPGGEAVMLKIAELLNV. Residues cysteine 49, cysteine 52, cysteine 57, cysteine 74, cysteine 117, cysteine 120, cysteine 123, cysteine 127, cysteine 147, cysteine 150, cysteine 153, and cysteine 157 each contribute to the [4Fe-4S] cluster site. 4Fe-4S ferredoxin-type domains lie at 108–137 and 138–167; these read MVAV…GATR and AMHT…LQPV.

Belongs to the 4Fe4S bacterial-type ferredoxin family. RnfB subfamily. In terms of assembly, the complex is composed of six subunits: RsxA, RsxB, RsxC, RsxD, RsxE and RsxG. [4Fe-4S] cluster serves as cofactor.

The protein localises to the cell inner membrane. Functionally, part of a membrane-bound complex that couples electron transfer with translocation of ions across the membrane. Required to maintain the reduced state of SoxR. This chain is Ion-translocating oxidoreductase complex subunit B, found in Shigella dysenteriae serotype 1 (strain Sd197).